The chain runs to 306 residues: UDP-3-O-acyl-N-acetylglucosamine deacetylase (306 aa).

Positions 79, 238, and 242 each coordinate Zn(2+). His-265 serves as the catalytic Proton donor.

It belongs to the LpxC family. It depends on Zn(2+) as a cofactor.

It catalyses the reaction a UDP-3-O-[(3R)-3-hydroxyacyl]-N-acetyl-alpha-D-glucosamine + H2O = a UDP-3-O-[(3R)-3-hydroxyacyl]-alpha-D-glucosamine + acetate. The protein operates within glycolipid biosynthesis; lipid IV(A) biosynthesis; lipid IV(A) from (3R)-3-hydroxytetradecanoyl-[acyl-carrier-protein] and UDP-N-acetyl-alpha-D-glucosamine: step 2/6. In terms of biological role, catalyzes the hydrolysis of UDP-3-O-myristoyl-N-acetylglucosamine to form UDP-3-O-myristoylglucosamine and acetate, the committed step in lipid A biosynthesis. This chain is UDP-3-O-acyl-N-acetylglucosamine deacetylase, found in Shewanella denitrificans (strain OS217 / ATCC BAA-1090 / DSM 15013).